Reading from the N-terminus, the 512-residue chain is Tyrosine-protein kinase Lyn (512 aa).

The interval 1–62 is disordered; it reads MGCIKSKGKD…GQRFQTKDPE (62 aa). Residue Gly-2 is the site of N-myristoyl glycine attachment. Cys-3 is lipidated: S-palmitoyl cysteine. 2 positions are modified to phosphoserine: Ser-11 and Ser-13. The SH3 domain maps to 63 to 123; that stretch reads EQGDIVVALY…PSNYVAKLNT (61 aa). The region spanning 129–226 is the SH2 domain; the sequence is WFFKDITRKD…GLCRRLEKAC (98 aa). At Tyr-193 the chain carries Phosphotyrosine. Ser-228 carries the post-translational modification Phosphoserine. Residues 247-501 enclose the Protein kinase domain; that stretch reads IKLVKRLGAG…YLQSVLDDFY (255 aa). ATP is bound by residues 253-261 and Lys-275; that span reads LGAGQFGEV. A phosphotyrosine mark is found at Tyr-306 and Tyr-316. The active-site Proton acceptor is Asp-367. Residue Tyr-397 is modified to Phosphotyrosine; by autocatalysis. Phosphotyrosine is present on residues Tyr-460 and Tyr-473. Tyr-508 carries the post-translational modification Phosphotyrosine; by autocatalysis, CSK and MATK.

The protein belongs to the protein kinase superfamily. Tyr protein kinase family. SRC subfamily. In terms of assembly, interacts with TEC. Interacts (via SH2 domain) with FLT3 (tyrosine phosphorylated). Interacts with LIME1 and with CD79A upon activation of the B-cell antigen receptor. Interacts with the B-cell receptor complex. Interacts with phosphorylated THEMIS2. Interacts with EPOR. Interacts with MS4A2/FCER1B. Interaction (via the SH2 and SH3 domains) with MUC1 is stimulated by IL7 and the subsequent phosphorylation increases the binding between MUC1 and CTNNB1/beta-catenin. Interacts with ADAM15. Interacts with NDFIP2 and more weakly with NDFIP1. Interacts with FASLG. Interacts with KIT. Interacts with HCLS1. Interacts with FCGR2B. Interacts with FCGR1A; the interaction may be indirect. Interacts with CD19, CD22, CD79A and CD79B. Interacts (via SH3 domain) with CBLC, PPP1R15A and PDE4A. Interacts with TGFB1I1. Interacts (via SH3 domain) with PIK3R1, the regulatory subunit of phosphatidylinositol 3-kinase; this interaction enhances phosphatidylinositol 3-kinase activity. Interacts with CSF2RB, the common subunit of the IL3, IL5 and CSF2 receptors. Interacts with PAG1; identified in a complex with PAG1 and STAT3. Interacts with ABL1. Interacts with PTPN6/SHP-1. Interacts (via SH3 domain) with SCIMP (via proline-rich region). This interaction facilitates the phosphorylation of SCIMP on 'Tyr-107', which enhances binding of SCIMP to TLR4, and consequently the phosphorylation of TLR4 in response to stimulation by lipopolysaccharide in macrophages. Interacts with LPXN (via LD motif 3) and the interaction is induced upon B-cell antigen receptor (BCR) activation. Interacts (via SH3-domain) with ANKRD54 (via ankyrin repeat region) in an activation-independent status of LYN. Forms a multiprotein complex with ANKRD54 and HCLS1. Interacts (via SH2 and SH3 domains) with UNC119; leading to LYN activation. Interacts with CD36. Interacts with LYN. Interacts with SKAP1 and FYB1; this interaction promotes the phosphorylation of CLNK. Interacts with BCAR1/CAS and NEDD9/HEF1. (Microbial infection) Interacts with Epstein-Barr virus LMP2A. As to quaternary structure, (Microbial infection) Interacts with Herpes virus saimiri tyrosine kinase interacting protein (Tip). Post-translationally, ubiquitinated by CBL, leading to its degradation. Ubiquitination is SH3-dependent. In terms of processing, autophosphorylated. Phosphorylated on tyrosine residues in response to KIT signaling. Phosphorylation at Tyr-397 is required for optimal activity. Phosphorylation at Tyr-508 inhibits kinase activity. Phosphorylated at Tyr-508 by CSK. Dephosphorylated by PTPRC/CD45. Becomes rapidly phosphorylated upon activation of the B-cell receptor and the immunoglobulin receptor FCGR1A. Phosphorylated in response to ITGB1 in B-cells. Detected in monocytes (at protein level). Detected in placenta, and in fetal brain, lung, liver and kidney. Widely expressed in a variety of organs, tissues, and cell types such as epidermoid, hematopoietic, and neuronal cells. Expressed in primary neuroblastoma tumors.

The protein localises to the cell membrane. It is found in the nucleus. Its subcellular location is the cytoplasm. The protein resides in the perinuclear region. It localises to the golgi apparatus. The protein localises to the membrane. The catalysed reaction is L-tyrosyl-[protein] + ATP = O-phospho-L-tyrosyl-[protein] + ADP + H(+). Its activity is regulated as follows. Subject to autoinhibition, mediated by intramolecular interactions between the SH2 domain and the C-terminal phosphotyrosine. Phosphorylation at Tyr-397 is required for optimal activity. Phosphorylated by CSK at Tyr-508; phosphorylation at Tyr-508 inhibits kinase activity. Kinase activity is modulated by dephosphorylation by PTPRC/CD45. Inhibited by Dasatinib, PP2, and SU6656. Non-receptor tyrosine-protein kinase that transmits signals from cell surface receptors and plays an important role in the regulation of innate and adaptive immune responses, hematopoiesis, responses to growth factors and cytokines, integrin signaling, but also responses to DNA damage and genotoxic agents. Functions primarily as negative regulator, but can also function as activator, depending on the context. Required for the initiation of the B-cell response, but also for its down-regulation and termination. Plays an important role in the regulation of B-cell differentiation, proliferation, survival and apoptosis, and is important for immune self-tolerance. Acts downstream of several immune receptors, including the B-cell receptor, CD79A, CD79B, CD5, CD19, CD22, FCER1, FCGR2, FCGR1A, TLR2 and TLR4. Plays a role in the inflammatory response to bacterial lipopolysaccharide. Mediates the responses to cytokines and growth factors in hematopoietic progenitors, platelets, erythrocytes, and in mature myeloid cells, such as dendritic cells, neutrophils and eosinophils. Acts downstream of EPOR, KIT, MPL, the chemokine receptor CXCR4, as well as the receptors for IL3, IL5 and CSF2. Plays an important role in integrin signaling. Regulates cell proliferation, survival, differentiation, migration, adhesion, degranulation, and cytokine release. Involved in the regulation of endothelial activation, neutrophil adhesion and transendothelial migration. Down-regulates signaling pathways by phosphorylation of immunoreceptor tyrosine-based inhibitory motifs (ITIM), that then serve as binding sites for phosphatases, such as PTPN6/SHP-1, PTPN11/SHP-2 and INPP5D/SHIP-1, that modulate signaling by dephosphorylation of kinases and their substrates. Phosphorylates LIME1 in response to CD22 activation. Phosphorylates BTK, CBL, CD5, CD19, CD72, CD79A, CD79B, CSF2RB, DOK1, HCLS1, LILRB3/PIR-B, MS4A2/FCER1B, SYK and TEC. Promotes phosphorylation of SIRPA, PTPN6/SHP-1, PTPN11/SHP-2 and INPP5D/SHIP-1. Mediates phosphorylation of the BCR-ABL fusion protein. Required for rapid phosphorylation of FER in response to FCER1 activation. Mediates KIT phosphorylation. Acts as an effector of EPOR (erythropoietin receptor) in controlling KIT expression and may play a role in erythroid differentiation during the switch between proliferation and maturation. Depending on the context, activates or inhibits several signaling cascades. Regulates phosphatidylinositol 3-kinase activity and AKT1 activation. Regulates activation of the MAP kinase signaling cascade, including activation of MAP2K1/MEK1, MAPK1/ERK2, MAPK3/ERK1, MAPK8/JNK1 and MAPK9/JNK2. Mediates activation of STAT5A and/or STAT5B. Phosphorylates LPXN on 'Tyr-72'. Kinase activity facilitates TLR4-TLR6 heterodimerization and signal initiation. Phosphorylates SCIMP on 'Tyr-107'; this enhances binding of SCIMP to TLR4, promoting the phosphorylation of TLR4, and a selective cytokine response to lipopolysaccharide in macrophages. Phosphorylates CLNK. Phosphorylates BCAR1/CAS and NEDD9/HEF1. The protein is Tyrosine-protein kinase Lyn (LYN) of Homo sapiens (Human).